Reading from the N-terminus, the 217-residue chain is Uridine kinase (217 aa).

17-24 (GASASGKS) is an ATP binding site.

Belongs to the uridine kinase family.

Its subcellular location is the cytoplasm. The enzyme catalyses uridine + ATP = UMP + ADP + H(+). It catalyses the reaction cytidine + ATP = CMP + ADP + H(+). It functions in the pathway pyrimidine metabolism; CTP biosynthesis via salvage pathway; CTP from cytidine: step 1/3. Its pathway is pyrimidine metabolism; UMP biosynthesis via salvage pathway; UMP from uridine: step 1/1. The protein is Uridine kinase of Haemophilus ducreyi (strain 35000HP / ATCC 700724).